The following is a 317-amino-acid chain: Retinol dehydrogenase 16 (317 aa).

33–57 (FITGCDSGFGKLLARQLDARGLRVL) provides a ligand contact to NAD(+). S164 serves as a coordination point for substrate. The active-site Proton acceptor is the Y176. A helical transmembrane segment spans residues 289–309 (LLYLPMSYMPTFLVDAIMYWV).

This sequence belongs to the short-chain dehydrogenases/reductases (SDR) family. In terms of assembly, homodimer. Not N-glycosylated. Highly expressed in adult liver (at protein level). Detected in endometrium, liver and foreskin. Detected in the spineous layers of adult skin, and at lower levels in basal and granular skin layers. Detected in fetal liver and lung.

The protein localises to the microsome membrane. It localises to the endoplasmic reticulum membrane. The catalysed reaction is all-trans-retinol--[retinol-binding protein] + NAD(+) = all-trans-retinal--[retinol-binding protein] + NADH + H(+). It catalyses the reaction all-trans-retinol + NAD(+) = all-trans-retinal + NADH + H(+). It carries out the reaction 13-cis-retinol + NAD(+) = 13-cis-retinal + NADH + H(+). The enzyme catalyses 11-cis-retinol + NAD(+) = 11-cis-retinal + NADH + H(+). The catalysed reaction is 9-cis-retinol + NAD(+) = 9-cis-retinal + NADH + H(+). It catalyses the reaction 5alpha-androstane-3alpha,17beta-diol + NAD(+) = 17beta-hydroxy-5alpha-androstan-3-one + NADH + H(+). It carries out the reaction androsterone + NAD(+) = 5alpha-androstan-3,17-dione + NADH + H(+). It functions in the pathway cofactor metabolism; retinol metabolism. With respect to regulation, inhibited by citral, perillyl alcohol, geraniol, farnesol and geranyl geraniol. Oxidoreductase with a preference for NAD. Oxidizes all-trans-retinol, 9-cis-retinol, 11-cis-retinol and 13-cis-retinol to the corresponding aldehydes. Has higher activity towards CRBP-bound retinol than with free retinol. Also oxidizes 3-alpha-hydroxysteroids. Oxidizes androstanediol and androsterone to dihydrotestosterone and androstanedione. Can also catalyze the reverse reaction. This chain is Retinol dehydrogenase 16, found in Homo sapiens (Human).